The primary structure comprises 195 residues: Putative EGF-like and EMI domain-containing protein 1 (195 aa).

Residues 86-97 enclose the EGF-like domain; the sequence is CTCKSGYQGNRC.

The chain is Putative EGF-like and EMI domain-containing protein 1 (EGFEM1P) from Homo sapiens (Human).